Reading from the N-terminus, the 94-residue chain is UPF0235 protein Dred_0717 (94 aa).

This sequence belongs to the UPF0235 family.

This Desulforamulus reducens (strain ATCC BAA-1160 / DSM 100696 / MI-1) (Desulfotomaculum reducens) protein is UPF0235 protein Dred_0717.